We begin with the raw amino-acid sequence, 197 residues long: CASP-like protein 0U1 (197 aa).

Residues 1 to 13 (MDDFDPTVTNSPK) lie on the Cytoplasmic side of the membrane. A helical membrane pass occupies residues 14–34 (FRLIAVQCLFSITAFAAMLSQ). The Extracellular segment spans residues 35 to 63 (RHGLAGPDEMTLEECGPQACGYQKFSNFK). The helical transmembrane segment at 64-84 (FLIAVCIIYAVFSLVVMAAYL) threads the bilayer. At 85-99 (LQRVPPPVTELTAYT) the chain is on the cytoplasmic side. Residues 100–120 (VMNVLLFAAFAMSATSCNITI) form a helical membrane-spanning segment. Topologically, residues 121 to 135 (VDPVYPVCKRATSAK) are extracellular. The helical transmembrane segment at 136-156 (ASIAFAFFTWLAVCFSMLFTY) threads the bilayer. Residues 157–197 (KEWRDVDYHVPGSGAYEFVPGVTSGSSRSSYPPQASSSSYA) are Cytoplasmic-facing. The tract at residues 178–197 (VTSGSSRSSYPPQASSSSYA) is disordered. Positions 180–197 (SGSSRSSYPPQASSSSYA) are enriched in low complexity.

This sequence belongs to the Casparian strip membrane proteins (CASP) family. Homodimer and heterodimers.

The protein resides in the cell membrane. The polypeptide is CASP-like protein 0U1 (Micromonas commoda (strain RCC299 / NOUM17 / CCMP2709) (Picoplanktonic green alga)).